The primary structure comprises 512 residues: GTPase Obg (512 aa).

An Obg domain is found at A2–V159. Positions A160 to E336 constitute an OBG-type G domain. Residues G166 to S173, F191 to H195, D212 to G215, N288 to D291, and S317 to V319 contribute to the GTP site. The Mg(2+) site is built by S173 and T193. An OCT domain is found at P355 to P439. The segment at G491–A512 is disordered. Acidic residues predominate over residues A497–A512.

The protein belongs to the TRAFAC class OBG-HflX-like GTPase superfamily. OBG GTPase family. In terms of assembly, monomer. Mg(2+) is required as a cofactor.

The protein resides in the cytoplasm. In terms of biological role, an essential GTPase which binds GTP, GDP and possibly (p)ppGpp with moderate affinity, with high nucleotide exchange rates and a fairly low GTP hydrolysis rate. Plays a role in control of the cell cycle, stress response, ribosome biogenesis and in those bacteria that undergo differentiation, in morphogenesis control. The sequence is that of GTPase Obg from Clavibacter michiganensis subsp. michiganensis (strain NCPPB 382).